The sequence spans 277 residues: NLP effector protein Pc109174 (277 aa).

Positions 1–19 (MNLVPALVLLLALAQTVLG) are cleaved as a signal peptide. The Hepta-peptide GHRHDWE motif motif lies at 119-125 (KSRHLWA). An N-linked (GlcNAc...) asparagine glycan is attached at asparagine 199.

The protein belongs to the Necrosis inducing protein (NPP1) family.

Its subcellular location is the secreted. In terms of biological role, secreted effector that contributes strongly to virulence during infection by P.capsici. Induces cell death in the Solanaceae, including hot pepper. The chain is NLP effector protein Pc109174 from Phytophthora capsici.